Reading from the N-terminus, the 211-residue chain is dITP/XTP pyrophosphatase (211 aa).

Residue 13 to 18 (THNPGK) participates in substrate binding. Mg(2+)-binding residues include D45 and D74. D74 functions as the Proton acceptor in the catalytic mechanism. Residues S75, 160-163 (FGYD), K183, and 195-196 (HR) each bind substrate.

It belongs to the HAM1 NTPase family. In terms of assembly, homodimer. It depends on Mg(2+) as a cofactor.

The enzyme catalyses XTP + H2O = XMP + diphosphate + H(+). It carries out the reaction dITP + H2O = dIMP + diphosphate + H(+). The catalysed reaction is ITP + H2O = IMP + diphosphate + H(+). Its function is as follows. Pyrophosphatase that catalyzes the hydrolysis of nucleoside triphosphates to their monophosphate derivatives, with a high preference for the non-canonical purine nucleotides XTP (xanthosine triphosphate), dITP (deoxyinosine triphosphate) and ITP. Seems to function as a house-cleaning enzyme that removes non-canonical purine nucleotides from the nucleotide pool, thus preventing their incorporation into DNA/RNA and avoiding chromosomal lesions. The chain is dITP/XTP pyrophosphatase from Bradyrhizobium diazoefficiens (strain JCM 10833 / BCRC 13528 / IAM 13628 / NBRC 14792 / USDA 110).